The primary structure comprises 138 residues: 16 kDa phloem protein 2 (138 aa).

The 108-residue stretch at Met-1 to Ser-108 folds into the C2 domain. 5 residues coordinate Ca(2+): Asp-20, Asp-27, Asp-78, Asp-80, and Asp-86.

Requires Ca(2+) as cofactor. In terms of tissue distribution, sieve elements of leaves, stems, roots and flowers.

Its function is as follows. Binds to both sense and antisense RNA. Interacts with mesophyll plasmodesmata to mediate its own cell-to-cell transport and potentiate RNA trafficking. This is 16 kDa phloem protein 2 (PP16-2) from Cucurbita maxima (Pumpkin).